The following is an 824-amino-acid chain: MEEKYIPRNVEEKWQKIWEENKTYKVTEDPSKPKYYLLEMFPYPSGRIHMGHVRNYSIGDVVGRFKRLRGFNVLHPMGWDAFGMPAENAAIQHKSHPAKWTYENIAYMRSQLKKMGLSYDWDRELATCDLDYYKWEQKVFLEMYEKGLAYKKTSYVNWCPKCETVLANEQVEDGACWRCDSEVTQKELEQWFFRITDYAEELLEYTEKLPGWPERVLTMQRNWIGKSYGCEIDFPVEGSLAKIKVFTTRQDTLYGATFMSLAPEHPMALELTTPDRRAEVEAFIDKVKKTDKIKRTAEDFEKEGVFTGSYCINPVTNRRMPVFLANFVLLDYGTGAVMAVPTHDQRDFEFARKYDLPLQVVIQPEGETLDPAAMATAYTEVGTMVNSGTFDGLRSDEAKEKIADYLAKEGIGTKTVNFRLRDWGISRQRYWGNPIPVIYCDICGVVPVPEKDLPVVLPMDVEFTGEGGSPLKKLDSFVNVPCPQCGQMARRETDTMDTFVQSSWYFLRYCCPDFAAGPIDKARAEYWMSVDQYIGGIEHAVLHLLYARFFTKALRDLGYVTVDEPFTNLLTQGMVIKDGAKMSKSKGNVVDPDALINRYGADTARLFSLFAAPPEKDLDWSDQGVDGSYRFLSRVWRLVCDLLPFVGKGGAVDSASLSDDARGLRRAVHKTIRKVTDDIDERFHFNTAIAAIMELVNAIYAFEPKNAPENGPVLTEAIESVVIMLSPFVPHVTEELWEALGHQGGVEAAGWPSFDPSAAVDEEFLIVVQVNGKLRGKVTVATDATEEQVKAAAFADEKVKPWIEGKQLRKAIYVPGKLLNIVVG.

The short motif at 42 to 52 is the 'HIGH' region element; sequence PYPSGRIHMGH. Residues 581 to 585 carry the 'KMSKS' region motif; that stretch reads KMSKS. Position 584 (K584) interacts with ATP.

It belongs to the class-I aminoacyl-tRNA synthetase family.

The protein localises to the cytoplasm. It carries out the reaction tRNA(Leu) + L-leucine + ATP = L-leucyl-tRNA(Leu) + AMP + diphosphate. This chain is Leucine--tRNA ligase, found in Geobacter metallireducens (strain ATCC 53774 / DSM 7210 / GS-15).